A 334-amino-acid chain; its full sequence is Glyoxylate reductase (334 aa).

NADP(+)-binding positions include 158–161, 180–182, and 239–241; these read FGRI, SRT, and IAR. Residues R241 and E270 contribute to the active site. Residue H288 is the Proton donor of the active site. Position 288 to 290 (288 to 290) interacts with NADP(+); sequence HIG.

Belongs to the D-isomer specific 2-hydroxyacid dehydrogenase family. GyaR subfamily. In terms of assembly, homodimer.

Its subcellular location is the cytoplasm. It catalyses the reaction glycolate + NAD(+) = glyoxylate + NADH + H(+). This chain is Glyoxylate reductase, found in Thermococcus gammatolerans (strain DSM 15229 / JCM 11827 / EJ3).